The following is a 130-amino-acid chain: MAKQIRKIGVRKTKRKIPKGVVHVQATFNNTIVTITDVRGEVLSWSSAGACGFKGTKKGTPFAAQTAAENAVRQVIDQGMKQAEIMISGPGSGRETAIRAIQAAGLGITLIRDVTPIPHNGCRPPKKRRV.

It belongs to the universal ribosomal protein uS11 family. Part of the 30S ribosomal subunit.

Its subcellular location is the plastid. The protein localises to the chloroplast. This Mesostigma viride (Green alga) protein is Small ribosomal subunit protein uS11c.